The chain runs to 275 residues: Large ribosomal subunit protein uL2 (275 aa).

The tract at residues Glu-219–Pro-263 is disordered. The span at Pro-227–Ala-239 shows a compositional bias: basic and acidic residues. The span at Lys-249–Asn-262 shows a compositional bias: basic residues.

It belongs to the universal ribosomal protein uL2 family. As to quaternary structure, part of the 50S ribosomal subunit. Forms a bridge to the 30S subunit in the 70S ribosome.

Its function is as follows. One of the primary rRNA binding proteins. Required for association of the 30S and 50S subunits to form the 70S ribosome, for tRNA binding and peptide bond formation. It has been suggested to have peptidyltransferase activity; this is somewhat controversial. Makes several contacts with the 16S rRNA in the 70S ribosome. The sequence is that of Large ribosomal subunit protein uL2 from Roseiflexus castenholzii (strain DSM 13941 / HLO8).